Here is a 374-residue protein sequence, read N- to C-terminus: Probable carboxylesterase 4, mitochondrial (374 aa).

Residues 1–52 (MLRRITCSSSLASPSLFLRFFRQLPRSYSSPTTIAVSGRNIRRLSTPTTLRC) constitute a mitochondrion transit peptide. The Involved in the stabilization of the negatively charged intermediate by the formation of the oxyanion hole signature appears at 135-137 (HGG). Residues Ser219, Asp317, and His349 contribute to the active site.

This sequence belongs to the 'GDXG' lipolytic enzyme family. As to expression, expressed in leaves, stems, flowers and siliques.

Its subcellular location is the mitochondrion. It catalyses the reaction a carboxylic ester + H2O = an alcohol + a carboxylate + H(+). Carboxylesterase acting on esters with varying acyl chain length. The sequence is that of Probable carboxylesterase 4, mitochondrial (CXE4) from Arabidopsis thaliana (Mouse-ear cress).